The primary structure comprises 159 residues: 2-C-methyl-D-erythritol 2,4-cyclodiphosphate synthase (159 aa).

Positions 10 and 12 each coordinate a divalent metal cation. 4-CDP-2-C-methyl-D-erythritol 2-phosphate is bound by residues 10-12 (DVH) and 36-37 (HS). A divalent metal cation is bound at residue H44. Residues 58-60 (DIG), 134-137 (TTSE), F141, and R144 each bind 4-CDP-2-C-methyl-D-erythritol 2-phosphate.

It belongs to the IspF family. In terms of assembly, homotrimer. Requires a divalent metal cation as cofactor.

The catalysed reaction is 4-CDP-2-C-methyl-D-erythritol 2-phosphate = 2-C-methyl-D-erythritol 2,4-cyclic diphosphate + CMP. It participates in isoprenoid biosynthesis; isopentenyl diphosphate biosynthesis via DXP pathway; isopentenyl diphosphate from 1-deoxy-D-xylulose 5-phosphate: step 4/6. Involved in the biosynthesis of isopentenyl diphosphate (IPP) and dimethylallyl diphosphate (DMAPP), two major building blocks of isoprenoid compounds. Catalyzes the conversion of 4-diphosphocytidyl-2-C-methyl-D-erythritol 2-phosphate (CDP-ME2P) to 2-C-methyl-D-erythritol 2,4-cyclodiphosphate (ME-CPP) with a corresponding release of cytidine 5-monophosphate (CMP). The polypeptide is 2-C-methyl-D-erythritol 2,4-cyclodiphosphate synthase (Cereibacter sphaeroides (strain ATCC 17029 / ATH 2.4.9) (Rhodobacter sphaeroides)).